The sequence spans 379 residues: Chaperone protein DnaJ (379 aa).

A J domain is found at 7–72; sequence CYYETLEVDR…DKRAAYDRYG (66 aa). Residues 135–213 form a CR-type zinc finger; that stretch reads GKTAQIEIPV…CSGAGRIERE (79 aa). Residues Cys-148, Cys-151, Cys-165, Cys-168, Cys-187, Cys-190, Cys-201, and Cys-204 each contribute to the Zn(2+) site. 4 CXXCXGXG motif repeats span residues 148–155, 165–172, 187–194, and 201–208; these read CESCSGTG, CSMCGGAG, CPGCQGRG, and CPACSGAG.

The protein belongs to the DnaJ family. In terms of assembly, homodimer. The cofactor is Zn(2+).

The protein localises to the cytoplasm. Its function is as follows. Participates actively in the response to hyperosmotic and heat shock by preventing the aggregation of stress-denatured proteins and by disaggregating proteins, also in an autonomous, DnaK-independent fashion. Unfolded proteins bind initially to DnaJ; upon interaction with the DnaJ-bound protein, DnaK hydrolyzes its bound ATP, resulting in the formation of a stable complex. GrpE releases ADP from DnaK; ATP binding to DnaK triggers the release of the substrate protein, thus completing the reaction cycle. Several rounds of ATP-dependent interactions between DnaJ, DnaK and GrpE are required for fully efficient folding. Also involved, together with DnaK and GrpE, in the DNA replication of plasmids through activation of initiation proteins. The chain is Chaperone protein DnaJ from Rhodopseudomonas palustris (strain BisB18).